Here is a 530-residue protein sequence, read N- to C-terminus: Portal protein (530 aa).

It belongs to the siphoviridae portal protein family. In terms of assembly, homododecamer. Interacts with the terminase complex composed of two small and one large terminase subunits. In terms of processing, proteolytically cleaved by the viral protease during capsid maturation.

It localises to the virion. Its function is as follows. Forms the portal vertex of the capsid. This portal plays critical roles in head assembly, genome packaging, neck/tail attachment, and genome ejection. The portal protein multimerizes as a single ring-shaped homododecamer arranged around a central channel. Binds to the terminase subunits to form the packaging machine. This Escherichia phage N15 (Bacteriophage N15) protein is Portal protein.